The primary structure comprises 162 residues: Regulator of sigma D (162 aa).

Belongs to the Rsd/AlgQ family. Interacts with RpoD.

Its subcellular location is the cytoplasm. Functionally, binds RpoD and negatively regulates RpoD-mediated transcription activation by preventing the interaction between the primary sigma factor RpoD with the catalytic core of the RNA polymerase and with promoter DNA. May be involved in replacement of the RNA polymerase sigma subunit from RpoD to RpoS during the transition from exponential growth to the stationary phase. The chain is Regulator of sigma D from Salmonella choleraesuis (strain SC-B67).